A 124-amino-acid chain; its full sequence is Small ribosomal subunit protein uS12 (124 aa).

Position 89 is a 3-methylthioaspartic acid (aspartate 89).

The protein belongs to the universal ribosomal protein uS12 family. As to quaternary structure, part of the 30S ribosomal subunit. Contacts proteins S8 and S17. May interact with IF1 in the 30S initiation complex.

Its function is as follows. With S4 and S5 plays an important role in translational accuracy. Interacts with and stabilizes bases of the 16S rRNA that are involved in tRNA selection in the A site and with the mRNA backbone. Located at the interface of the 30S and 50S subunits, it traverses the body of the 30S subunit contacting proteins on the other side and probably holding the rRNA structure together. The combined cluster of proteins S8, S12 and S17 appears to hold together the shoulder and platform of the 30S subunit. The protein is Small ribosomal subunit protein uS12 of Buchnera aphidicola subsp. Cinara cedri (strain Cc).